A 1012-amino-acid chain; its full sequence is Autotransporter adhesin BpaC (1012 aa).

The N-terminal stretch at 1–71 (MNRIFKSIWC…PFAEEAMAAN (71 aa)) is a signal peptide. Residues 72 to 921 (NAGVCLTYNG…VGQLNSAVSG (850 aa)) are surface exposed passenger domain. Disordered regions lie at residues 420–746 (GLQG…AGAT) and 785–809 (ENSTANGANSTASGNGSSAFGESAA). Over residues 427-442 (ANTGTASGDNSTASGD) the composition is skewed to polar residues. The span at 443 to 504 (NATASGTNST…ANGTNSTASG (62 aa)) shows a compositional bias: low complexity. Over residues 505–519 (DNSTASGTNASATGE) the composition is skewed to polar residues. Positions 520–588 (NSTATGTDST…ANGTNSTASG (69 aa)) are enriched in low complexity. A compositionally biased stretch (polar residues) spans 589–603 (DNSTASGTNASATGE). Over residues 604-630 (NSTATGTDSTASGSNSTANGTNSTASG) the composition is skewed to low complexity. Positions 631–645 (DNSTASGTNASATGE) are enriched in polar residues. Low complexity-rich tracts occupy residues 646 to 700 (NSTA…TASG) and 708 to 746 (TNASATGENSTATGTASTASGSNSTANGANSTASGAGAT). Residues 922–959 (IRNQMDGMQGQIDTLARDAYSGIAAATALTMIPDVDPG) form an outer membrane translocation of the passenger domain region. Residues 960–1012 (KTLAVGIGTANFKGYQASALGATARITQNLKVKTGVSYSGSNYVWGAGMSYQW) form a translocator domain region.

It belongs to the autotransporter-2 (AT-2) (TC 1.B.40) family. As to quaternary structure, homotrimer.

It localises to the cell surface. It is found in the cell outer membrane. Its function is as follows. Involved in virulence. Mediates adherence to human respiratory epithelial cells. This is Autotransporter adhesin BpaC from Burkholderia mallei (strain ATCC 23344).